The primary structure comprises 160 residues: MDKDDLTHFNDEKRAKMVDVTSKSETKRRAIARATIHMNEETLARIHAGKIAKGDVLAVAQVAGIMAAKKTSELIPMCHPIMTTKADISFDDDGKTALTITSEVVTVGKTGVEMEALTAVTIAALTIYDMCKAMDKGMQIEKTYLVEKTGGKSGTFKAEA.

Residues 77-79 and 114-115 contribute to the substrate site; these read MCH and ME. Asp-129 is an active-site residue.

This sequence belongs to the MoaC family. In terms of assembly, homohexamer; trimer of dimers.

The catalysed reaction is (8S)-3',8-cyclo-7,8-dihydroguanosine 5'-triphosphate = cyclic pyranopterin phosphate + diphosphate. It participates in cofactor biosynthesis; molybdopterin biosynthesis. Functionally, catalyzes the conversion of (8S)-3',8-cyclo-7,8-dihydroguanosine 5'-triphosphate to cyclic pyranopterin monophosphate (cPMP). The protein is Cyclic pyranopterin monophosphate synthase of Listeria innocua serovar 6a (strain ATCC BAA-680 / CLIP 11262).